A 431-amino-acid chain; its full sequence is Shaggy-related protein kinase beta (431 aa).

Residues 12–24 (SGRNFVSSDNVGE) show a composition bias toward polar residues. Residues 12–65 (SGRNFVSSDNVGETETPRSKPNQNREETESTETTSYEKDSVSSSENSDHLPKEI) are disordered. Composition is skewed to basic and acidic residues over residues 26–39 (ETPR…REET) and 46–65 (SYEK…PKEI). One can recognise a Protein kinase domain in the interval 102-386 (YRAEHVIGTG…ALEACAHPFF (285 aa)). ATP is bound by residues 108–116 (IGTGSFGVV) and Lys131. The active-site Proton acceptor is the Asp227. Position 262 is a phosphotyrosine (Tyr262).

Belongs to the protein kinase superfamily. CMGC Ser/Thr protein kinase family. GSK-3 subfamily. In terms of processing, autophosphorylated mainly on threonine and serine residues.

The enzyme catalyses L-seryl-[protein] + ATP = O-phospho-L-seryl-[protein] + ADP + H(+). It catalyses the reaction L-threonyl-[protein] + ATP = O-phospho-L-threonyl-[protein] + ADP + H(+). May mediate extracellular signals to regulate transcription in differentiating cells. The chain is Shaggy-related protein kinase beta from Arabidopsis thaliana (Mouse-ear cress).